The chain runs to 144 residues: D-aminoacyl-tRNA deacylase (144 aa).

The Gly-cisPro motif, important for rejection of L-amino acids motif lies at 136 to 137 (GP).

It belongs to the DTD family. As to quaternary structure, homodimer.

Its subcellular location is the cytoplasm. The catalysed reaction is glycyl-tRNA(Ala) + H2O = tRNA(Ala) + glycine + H(+). The enzyme catalyses a D-aminoacyl-tRNA + H2O = a tRNA + a D-alpha-amino acid + H(+). In terms of biological role, an aminoacyl-tRNA editing enzyme that deacylates mischarged D-aminoacyl-tRNAs. Also deacylates mischarged glycyl-tRNA(Ala), protecting cells against glycine mischarging by AlaRS. Acts via tRNA-based rather than protein-based catalysis; rejects L-amino acids rather than detecting D-amino acids in the active site. By recycling D-aminoacyl-tRNA to D-amino acids and free tRNA molecules, this enzyme counteracts the toxicity associated with the formation of D-aminoacyl-tRNA entities in vivo and helps enforce protein L-homochirality. The protein is D-aminoacyl-tRNA deacylase of Actinobacillus succinogenes (strain ATCC 55618 / DSM 22257 / CCUG 43843 / 130Z).